The sequence spans 1403 residues: Centrosomal protein of 162 kDa (1403 aa).

Residues 20–46 (LSDDSFENSNKTPRQPNEDNKEMKKKD) form a disordered region. Residues 35-46 (PNEDNKEMKKKD) show a composition bias toward basic and acidic residues. A phosphoserine mark is found at Ser-160 and Ser-163. 4 disordered regions span residues 169 to 243 (LHRY…MLAN), 256 to 292 (VGLS…SSGD), 306 to 348 (SLGD…ESDL), and 453 to 606 (NPSL…GGNR). Residues 178–208 (PAEDGCENESEQEELPETYSDDFEDAEDADD) are compositionally biased toward acidic residues. Basic and acidic residues predominate over residues 210–238 (LITKDEETHPKENSESGKDSFPKQEEEKT). The span at 485–500 (PCKKARSTPSLPKRKP) shows a compositional bias: basic residues. Composition is skewed to basic and acidic residues over residues 526–536 (LEKKTSKDNTK) and 571–585 (PHRE…RPED). The stretch at 614-1124 (KRAQDAEEKW…QKERRMMLSR (511 aa)) forms a coiled coil. Residues 1126–1147 (IPRSREETAAKRLKKDPNRGHG) form a disordered region. The segment covering 1128 to 1144 (RSREETAAKRLKKDPNR) has biased composition (basic and acidic residues). A coiled-coil region spans residues 1174–1386 (EENYRLRSEL…LDVLRELHRQ (213 aa)).

This sequence belongs to the CEP162 family. As to quaternary structure, interacts with CPNE4. Interacts with alpha-tubulin. Interacts with CEP290.

The protein localises to the cytoplasm. The protein resides in the cytoskeleton. It localises to the microtubule organizing center. Its subcellular location is the centrosome. It is found in the centriole. The protein localises to the spindle. The protein resides in the nucleus. Required to promote assembly of the transition zone in primary cilia. Acts by specifically recognizing and binding the axonemal microtubule. Localizes to the distal ends of centrioles before ciliogenesis and directly binds to axonemal microtubule, thereby promoting and restricting transition zone formation specifically at the cilia base. Required to mediate CEP290 association with microtubules. This chain is Centrosomal protein of 162 kDa (Cep162), found in Mus musculus (Mouse).